Reading from the N-terminus, the 355-residue chain is DNA polymerase IV (355 aa).

Residues 4–185 (IIHIDMDCYF…LSLGKIPGVG (182 aa)) form the UmuC domain. The Mg(2+) site is built by Asp-8 and Asp-103. Glu-104 is an active-site residue.

This sequence belongs to the DNA polymerase type-Y family. As to quaternary structure, monomer. It depends on Mg(2+) as a cofactor.

Its subcellular location is the cytoplasm. The catalysed reaction is DNA(n) + a 2'-deoxyribonucleoside 5'-triphosphate = DNA(n+1) + diphosphate. Poorly processive, error-prone DNA polymerase involved in untargeted mutagenesis. Copies undamaged DNA at stalled replication forks, which arise in vivo from mismatched or misaligned primer ends. These misaligned primers can be extended by PolIV. Exhibits no 3'-5' exonuclease (proofreading) activity. May be involved in translesional synthesis, in conjunction with the beta clamp from PolIII. The chain is DNA polymerase IV from Shewanella amazonensis (strain ATCC BAA-1098 / SB2B).